A 513-amino-acid polypeptide reads, in one-letter code: ATP synthase subunit alpha 2 (513 aa).

Position 169–176 (169–176 (GDRQTGKT)) interacts with ATP.

It belongs to the ATPase alpha/beta chains family. F-type ATPases have 2 components, CF(1) - the catalytic core - and CF(0) - the membrane proton channel. CF(1) has five subunits: alpha(3), beta(3), gamma(1), delta(1), epsilon(1). CF(0) has three main subunits: a(1), b(2) and c(9-12). The alpha and beta chains form an alternating ring which encloses part of the gamma chain. CF(1) is attached to CF(0) by a central stalk formed by the gamma and epsilon chains, while a peripheral stalk is formed by the delta and b chains.

Its subcellular location is the cell inner membrane. It carries out the reaction ATP + H2O + 4 H(+)(in) = ADP + phosphate + 5 H(+)(out). Functionally, produces ATP from ADP in the presence of a proton gradient across the membrane. The alpha chain is a regulatory subunit. This chain is ATP synthase subunit alpha 2, found in Shewanella frigidimarina (strain NCIMB 400).